A 294-amino-acid polypeptide reads, in one-letter code: IVFRAAQERSDIEIVAINDLLDAEYMAYMLKYDSTHGRFNGTVEVKDGHLVVNGKTIRVTAEKDPANLKWNEVGVDVVAEATGIFLTDETARKHITAGAKKVVLTGPSKDATPMFVRGANFDKYAGQDIVSNASCTTNCLAPLAKVINDNFGIVEGLMTTVHATTATQKTVDGPSHKDWRGGRGASQNIIPSSTGAAKAVGKVIPELKGKLTGMAFRVPTPNVSVVDLTVRLEKPATYEEIKKAMKDAAEGSMKGVLGYVEDDVVSTDFNGEVLTSVFDAKAGIALNDNFVKLV.

NAD(+)-binding residues include Asp19, Lys63, and Thr105. D-glyceraldehyde 3-phosphate is bound by residues 134 to 136 and Thr165; that span reads SCT. Cys135 functions as the Nucleophile in the catalytic mechanism. The tract at residues 169-188 is disordered; the sequence is KTVDGPSHKDWRGGRGASQN. Residues 194–195 and Arg217 each bind D-glyceraldehyde 3-phosphate; that span reads TG.

The protein belongs to the glyceraldehyde-3-phosphate dehydrogenase family. In terms of assembly, homotetramer.

It is found in the cytoplasm. The catalysed reaction is D-glyceraldehyde 3-phosphate + phosphate + NAD(+) = (2R)-3-phospho-glyceroyl phosphate + NADH + H(+). It participates in carbohydrate degradation; glycolysis; pyruvate from D-glyceraldehyde 3-phosphate: step 1/5. Its function is as follows. Catalyzes the oxidative phosphorylation of glyceraldehyde 3-phosphate (G3P) to 1,3-bisphosphoglycerate (BPG) using the cofactor NAD. The first reaction step involves the formation of a hemiacetal intermediate between G3P and a cysteine residue, and this hemiacetal intermediate is then oxidized to a thioester, with concomitant reduction of NAD to NADH. The reduced NADH is then exchanged with the second NAD, and the thioester is attacked by a nucleophilic inorganic phosphate to produce BPG. The sequence is that of Glyceraldehyde-3-phosphate dehydrogenase (gap) from Serratia marcescens.